Consider the following 89-residue polypeptide: Small ribosomal subunit protein uS14 (89 aa).

Belongs to the universal ribosomal protein uS14 family. As to quaternary structure, part of the 30S ribosomal subunit. Contacts proteins S3 and S10.

In terms of biological role, binds 16S rRNA, required for the assembly of 30S particles and may also be responsible for determining the conformation of the 16S rRNA at the A site. In Chlorobium phaeovibrioides (strain DSM 265 / 1930) (Prosthecochloris vibrioformis (strain DSM 265)), this protein is Small ribosomal subunit protein uS14.